Here is a 607-residue protein sequence, read N- to C-terminus: UvrABC system protein C (607 aa).

In terms of domain architecture, GIY-YIG spans 12 to 91; it reads DSPGVYLYKD…IKRYRPRYNI (80 aa). One can recognise a UVR domain in the interval 200–235; that stretch reads ENLIKKLKKEMAIASDNLEFERAAKLRDQILALEKI.

This sequence belongs to the UvrC family. As to quaternary structure, interacts with UvrB in an incision complex.

It localises to the cytoplasm. The UvrABC repair system catalyzes the recognition and processing of DNA lesions. UvrC both incises the 5' and 3' sides of the lesion. The N-terminal half is responsible for the 3' incision and the C-terminal half is responsible for the 5' incision. The polypeptide is UvrABC system protein C (Carboxydothermus hydrogenoformans (strain ATCC BAA-161 / DSM 6008 / Z-2901)).